We begin with the raw amino-acid sequence, 609 residues long: MCGIVGAIAGRDVVPVLIEGLKRLEYRGYDSSGIAVLESGSIRRVRRTGRVAEMAVAATQEGFTASLGIGHTRWATHGGVTEANAHPHVSHGVVLVHNGIIENYEVQRERLSAFGYVFQSQTDTEVIAHLIHYYMQQGGDLLGALQCAVKALTGIYALAVMSQAEPGRFVCARMGCPLLIGIGDGESFVASDISALIQATRQVIFLEDGDTAEIRRDGISIFNAEQCPVERSLHLSNVSLSSLELGEFRHFMQKEIHEQPRVLADTMEAAIDAAGFPPMLFGAQAESVFRGITGIQILACGTSYYAGLTARYWIEAIAGLPCQVEIASEYRYRKAYVNPQHLVVTISQSGETLDTLEALKYAKALGHRHTLSICNAPDSAIPRISELICYTRAGPEIGVASTKAFTTQLVVLFQLAVALGVLRGAVDAEGEAAYLEQLRQLPCSVQQALNLEPQIAGWAECFSSRHHALFLGRGLHYPIALEGALKLKEISYIHAEAYPAGELKHGPLALVDADMPVVVIAPNDSLLEKVKSNMQEVRARGGELFVFADQDSHFSESEGLHVIRTLRHTGVLSPLVHTIPVQLLAYHTALVRGTDVDKPRNLAKSVTVE.

C2 (nucleophile; for GATase activity) is an active-site residue. Residues 2-217 enclose the Glutamine amidotransferase type-2 domain; the sequence is CGIVGAIAGR…DGDTAEIRRD (216 aa). 2 consecutive SIS domains span residues 285-425 and 458-599; these read AESV…LRGA and WAEC…VDKP. The For Fru-6P isomerization activity role is filled by K604.

As to quaternary structure, homodimer.

It localises to the cytoplasm. The enzyme catalyses D-fructose 6-phosphate + L-glutamine = D-glucosamine 6-phosphate + L-glutamate. In terms of biological role, catalyzes the first step in hexosamine metabolism, converting fructose-6P into glucosamine-6P using glutamine as a nitrogen source. The sequence is that of Glutamine--fructose-6-phosphate aminotransferase [isomerizing] from Xylella fastidiosa (strain Temecula1 / ATCC 700964).